Consider the following 216-residue polypeptide: PRA1 family protein B6 (216 aa).

A2 is subject to N-acetylalanine. 5 helical membrane passes run 83–103 (LVAI…FLLA), 105–125 (LAAS…LVIG), 135–155 (LGIL…GSLL), 159–179 (LAVG…EDLF), and 186–206 (IGSG…AAAI).

This sequence belongs to the PRA1 family. As to quaternary structure, interacts with PRA1B1, PRA1B2, PRA1B3, PRA1B4, PRA1B5 and PRA1E. As to expression, expressed in hypocotyls, roots, lateral roots, lateral root caps, columella cells, leaves and stomata.

It is found in the endoplasmic reticulum membrane. Its function is as follows. May be involved in both secretory and endocytic intracellular trafficking in the endosomal/prevacuolar compartments. The sequence is that of PRA1 family protein B6 (PRA1B6) from Arabidopsis thaliana (Mouse-ear cress).